The following is a 460-amino-acid chain: Argininosuccinate lyase (460 aa).

Belongs to the lyase 1 family. Argininosuccinate lyase subfamily.

The protein resides in the cytoplasm. The catalysed reaction is 2-(N(omega)-L-arginino)succinate = fumarate + L-arginine. The protein operates within amino-acid biosynthesis; L-arginine biosynthesis; L-arginine from L-ornithine and carbamoyl phosphate: step 3/3. The sequence is that of Argininosuccinate lyase from Campylobacter jejuni (strain RM1221).